Reading from the N-terminus, the 605-residue chain is Probable Xaa-Pro aminopeptidase P (605 aa).

Residues Asp402, Asp413, Glu511, and Glu525 each coordinate Mn(2+).

The protein belongs to the peptidase M24B family. It depends on Mn(2+) as a cofactor.

The enzyme catalyses Release of any N-terminal amino acid, including proline, that is linked to proline, even from a dipeptide or tripeptide.. Catalyzes the removal of a penultimate prolyl residue from the N-termini of peptides. This Leptosphaeria maculans (strain JN3 / isolate v23.1.3 / race Av1-4-5-6-7-8) (Blackleg fungus) protein is Probable Xaa-Pro aminopeptidase P (AMPP).